Reading from the N-terminus, the 999-residue chain is Tyrosine-protein kinase Mer (999 aa).

The N-terminal stretch at 1 to 20 (MGPAPLPLLLGLFLPALWRR) is a signal peptide. The Extracellular segment spans residues 21-505 (AITEAREEAK…PGNADPVLII (485 aa)). Ig-like C2-type domains follow at residues 81–186 (PQVT…EIVS) and 197–273 (PHFT…LTVS). N-linked (GlcNAc...) asparagine glycosylation is found at Asn-114, Asn-170, Asn-207, Asn-215, Asn-234, Asn-294, Asn-316, Asn-329, Asn-336, Asn-354, Asn-389, Asn-395, Asn-442, and Asn-454. Cys-115 and Cys-175 are joined by a disulfide. A disulfide bridge connects residues Cys-218 and Cys-262. Fibronectin type-III domains lie at 286 to 381 (PPTE…TTEG) and 386 to 484 (APLN…PAHG). Residues 506-526 (FGCFCGFILIGLILYISLAIR) form a helical membrane-spanning segment. At 527 to 999 (KRVQETKFGN…DSSEGSEVLM (473 aa)) the chain is on the cytoplasmic side. Ser-543 bears the Phosphoserine mark. A Protein kinase domain is found at 587–858 (LILGKILGEG…VLRLQLEKLL (272 aa)). Residues 593 to 601 (LGEGEFGSV) and Lys-615 each bind ATP. Asp-723 acts as the Proton acceptor in catalysis. Tyr-749, Tyr-753, Tyr-754, and Tyr-872 each carry phosphotyrosine; by autocatalysis. Position 935 is a phosphoserine (Ser-935).

Belongs to the protein kinase superfamily. Tyr protein kinase family. AXL/UFO subfamily. Interacts (upon activation) with TNK2; stimulates TNK2 autophosphorylation. Interacts (via N-terminus) with extracellular ligands LGALS3, TUB, TULP1 and GAS6. Interacts with VAV1 in a phosphotyrosine-independent manner. Interacts with TIMD4; this interaction enhances TIMD4-mediated efferocytosis. Autophosphorylated on Tyr-749, Tyr-753 and Tyr-754 in the activation loop allowing full activity. Autophosphorylated on Tyr-872 leading to recruitment of downstream partners of the signaling cascade such as PLCG2. Not expressed in normal B- and T-lymphocytes but is expressed in numerous neoplastic B- and T-cell lines. Highly expressed in testis, ovary, prostate, lung, and kidney, with lower expression in spleen, small intestine, colon, and liver.

Its subcellular location is the cell membrane. The enzyme catalyses L-tyrosyl-[protein] + ATP = O-phospho-L-tyrosyl-[protein] + ADP + H(+). In terms of biological role, receptor tyrosine kinase that transduces signals from the extracellular matrix into the cytoplasm by binding to several ligands including LGALS3, TUB, TULP1 or GAS6. Regulates many physiological processes including cell survival, migration, differentiation, and phagocytosis of apoptotic cells (efferocytosis). Ligand binding at the cell surface induces autophosphorylation of MERTK on its intracellular domain that provides docking sites for downstream signaling molecules. Following activation by ligand, interacts with GRB2 or PLCG2 and induces phosphorylation of MAPK1, MAPK2, FAK/PTK2 or RAC1. MERTK signaling plays a role in various processes such as macrophage clearance of apoptotic cells, platelet aggregation, cytoskeleton reorganization and engulfment. Functions in the retinal pigment epithelium (RPE) as a regulator of rod outer segments fragments phagocytosis. Also plays an important role in inhibition of Toll-like receptors (TLRs)-mediated innate immune response by activating STAT1, which selectively induces production of suppressors of cytokine signaling SOCS1 and SOCS3. The chain is Tyrosine-protein kinase Mer (MERTK) from Homo sapiens (Human).